Consider the following 688-residue polypeptide: MWCLVLFSLLASFSAEPTMHGEILSPNYPQAYPNDVVKSWDIEVPEGFGIHLYFTHVDIEPSESCAYDSVQIISGGIEEGRLCGQKTSKSPNSPIIEEFQFPYNKLQVVFTSDFSNEERFTGFAAYYTAIDINECTDFTDVPCSHFCNNFIGGYFCSCPPEYFLHDDMRNCGVNCSGDVFTALIGEISSPNYPNPYPENSRCEYQIQLQEGFQVVVTMQREDFDVEPADSEGNCPDSLTFASKNQQFGPYCGNGFPGPLTIRTQSNTLGIVFQTDLMGQKKGWKLRYHGDPISCAKKITANSTWEPDKAKYVFKDVVKITCVDGFEVVEGHVSSTSYYSTCQSDGQWSNSGLKCQPVYCGIPDPIANGKVEEPENSVFGTVVHYTCEEPYYYMEHEEGGEYRCAANGRWVNDQLGIELPRCIPACGVPTEPFQVHQRIFGGQPAKIENFPWQVFFNHPRASGALINEYWVLTAAHVLEKISDPLMYVGTMSVRTTLLENAQRLYSKRVFIHPSWKKEDDPNTRTNFDNDIALVQLKDPVKMGPKVSPICLPGTSSEYNVSPGDMGLISGWGSTEKKVFVINLRGAKVPVTSLETCKQVKEENPTVRPEDYVFTDNMICAGEKGVDSCHGDSGGAFAFQVPNVTVPKFYVAGLVSWGKRCGTYGVYTKVKNYVDWILKTMQENSGPRKD.

A signal peptide spans 1–15 (MWCLVLFSLLASFSA). Positions 16-130 (EPTMHGEILS…TGFAAYYTAI (115 aa)) constitute a CUB 1 domain. Residues Glu60, Asp68, Asp113, Asp131, Ile132, and Glu134 each coordinate Ca(2+). A disulfide bridge links Cys65 with Cys83. The region spanning 131–172 (DINECTDFTDVPCSHFCNNFIGGYFCSCPPEYFLHDDMRNCG) is the EGF-like; calcium-binding domain. Disulfide bonds link Cys135/Cys147, Cys143/Cys156, and Cys158/Cys171. 3 residues coordinate Ca(2+): Asn149, Phe150, and Gly153. At Asn149 the chain carries (3R)-3-hydroxyasparagine. Residue Asn174 is glycosylated (N-linked (GlcNAc...) asparagine). Cys175 and Cys202 are joined by a disulfide. The region spanning 175-290 (CSGDVFTALI…KGWKLRYHGD (116 aa)) is the CUB 2 domain. Ca(2+) is bound by residues Glu226, Asp236, Asp275, Gly278, and Gln279. A disulfide bond links Cys234 and Cys251. Sushi domains follow at residues 292–356 (ISCA…KCQP) and 357–423 (VYCG…RCIP). 7 disulfides stabilise this stretch: Cys294–Cys341, Cys321–Cys354, Cys359–Cys403, Cys386–Cys421, Cys425–Cys549, Cys595–Cys618, and Cys627–Cys659. The 243-residue stretch at 438–680 (IFGGQPAKIE…YVDWILKTMQ (243 aa)) folds into the Peptidase S1 domain. Residues His475 and Asp529 each act as charge relay system in the active site. Ser631 serves as the catalytic Charge relay system. Asn641 carries N-linked (GlcNAc...) asparagine glycosylation.

This sequence belongs to the peptidase S1 family. As to quaternary structure, core component of the complement C1 complex, a calcium-dependent complex composed of 1 molecule of the C1Q subcomplex, 2 molecules of C1R and 2 molecules of C1S. The C1Q subcomplex is composed 18 subunits: 3 chains of C1QA, C1QB, and C1QC trimerize to form 6 collagen-like triple helices connected to six globular ligand-recognition modules. In terms of processing, cleaved and activated by C1R to generate Complement C1s subcomponent heavy and light chains. Post-translationally, the iron and 2-oxoglutarate dependent 3-hydroxylation of aspartate and asparagine is (R) stereospecific within EGF domains. As to expression, predominantly expressed in liver.

Its subcellular location is the secreted. It localises to the cell surface. It carries out the reaction Cleavage of Arg-|-Ala bond in complement component C4 to form C4a and C4b, and Lys(or Arg)-|-Lys bond in complement component C2 to form C2a and C2b: the 'classical' pathway C3 convertase.. Its activity is regulated as follows. Cleaved and activated by C1R. Immunoglobulin-binding promotes autoactivation of C1R, which results in the cleavage of the Arg-Ile bond in the catalytic domain. Inhibited by C1 inhibitor (SERPING1). In terms of biological role, component of the complement C1 complex, a multiprotein complex that initiates the classical pathway of the complement system, a cascade of proteins that leads to phagocytosis and breakdown of pathogens and signaling that strengthens the adaptive immune system. C1S is activated following association of the C1 complex with immunoglobulins (IgG or IgM) complexed with antigens to form antigen-antibody complexes on the surface of pathogens. C1S is cleaved and activated by C1R to generate C1s subcomponent heavy and light chains. C1s subcomponent light chain then cleaves and activates C2 and C4, the next components of the classical complement pathway. Serine protease component of the complement C1 complex, which catalyzes cleavage and activation of C2 and C4, the next components of the classical complement pathway. Also cleaves IGFBP5 and thereby inhibits the trophic effects of IGF1. This Mus musculus (Mouse) protein is Complement C1s-1 subcomponent.